The following is a 554-amino-acid chain: Rab GTPase-binding effector protein 2 (554 aa).

Disordered stretches follow at residues 1–28, 167–208, and 371–395; these read MAAA…SELS, IQRR…GPAA, and GLRA…DEAL. A compositionally biased stretch (basic and acidic residues) spans 14–28; sequence PQEKQKDASESSELS. Residues 15-173 adopt a coiled-coil conformation; sequence QEKQKDASES…IQEIQRRPRQ (159 aa). Phosphoserine is present on residues S176, S180, S187, and S191. A coiled-coil region spans residues 274–509; sequence DSQWEQLQVE…QAELETSEQV (236 aa).

Belongs to the rabaptin family. As to quaternary structure, heterodimer with RABGEF1. The dimer binds RAB5A that has been activated by GTP-binding. Interacts with SDCCAG8; this interaction is important for ciliogenesis regulation. Interacts with RAB4A; this interaction may mediate VEGFR2 cell surface expression.

It localises to the cytoplasm. Its subcellular location is the early endosome. The protein localises to the cytoskeleton. The protein resides in the microtubule organizing center. It is found in the centrosome. It localises to the cilium basal body. Functionally, plays a role in membrane trafficking and in homotypic early endosome fusion. Participates in arteriogenesis by regulating vascular endothelial growth factor receptor 2/VEGFR2 cell surface expression and endosomal trafficking. By interacting with SDCCAG8, localizes to centrosomes and plays a critical role in ciliogenesis. This chain is Rab GTPase-binding effector protein 2 (Rabep2), found in Mus musculus (Mouse).